A 141-amino-acid polypeptide reads, in one-letter code: Arsenate reductase (141 aa).

The active-site Nucleophile; cysteine thioarsenate intermediate is cysteine 12.

Belongs to the ArsC family.

The enzyme catalyses [glutaredoxin]-dithiol + arsenate + glutathione + H(+) = glutathionyl-S-S-[glutaredoxin] + arsenite + H2O. Its function is as follows. Involved in resistance to arsenate. Catalyzes the reduction of arsenate [As(V)] to arsenite [As(III)]. The polypeptide is Arsenate reductase (Escherichia coli).